Here is a 109-residue protein sequence, read N- to C-terminus: NADH-quinone oxidoreductase subunit K (109 aa).

A run of 3 helical transmembrane segments spans residues leucine 12–methionine 32, isoleucine 40–valine 60, and isoleucine 72–tyrosine 92.

Belongs to the complex I subunit 4L family. NDH-1 is composed of 14 different subunits. Subunits NuoA, H, J, K, L, M, N constitute the membrane sector of the complex.

The protein resides in the cell inner membrane. The catalysed reaction is a quinone + NADH + 5 H(+)(in) = a quinol + NAD(+) + 4 H(+)(out). Functionally, NDH-1 shuttles electrons from NADH, via FMN and iron-sulfur (Fe-S) centers, to quinones in the respiratory chain. The immediate electron acceptor for the enzyme in this species is believed to be ubiquinone. Couples the redox reaction to proton translocation (for every two electrons transferred, four hydrogen ions are translocated across the cytoplasmic membrane), and thus conserves the redox energy in a proton gradient. The sequence is that of NADH-quinone oxidoreductase subunit K from Rickettsia bellii (strain RML369-C).